The chain runs to 418 residues: Transmembrane protease serine 11D (418 aa).

The Cytoplasmic segment spans residues Met-1–Cys-20. The helical; Signal-anchor for type II membrane protein transmembrane segment at Phe-21–Leu-41 threads the bilayer. Residues Ala-42–Ile-418 are Extracellular-facing. One can recognise an SEA domain in the interval Lys-46–Gln-163. Asn-144 is a glycosylation site (N-linked (GlcNAc...) asparagine). 4 cysteine pairs are disulfide-bonded: Cys-173–Cys-292, Cys-212–Cys-228, Cys-337–Cys-353, and Cys-364–Cys-393. Residues Ile-187–Gly-417 enclose the Peptidase S1 domain. Active-site charge relay system residues include His-227 and Asp-272. The active-site Charge relay system is the Ser-368.

Belongs to the peptidase S1 family. In terms of assembly, monomer. As to expression, located in the cells of the submucosal serous glands of the bronchi and trachea.

It localises to the cell membrane. Its subcellular location is the secreted. Its activity is regulated as follows. Strongly inhibited by diisopropyl fluorophosphate, leupeptin, antipain, aprotinin, and soybean trypsin inhibitor, but hardly inhibited by secretory leukocyte protease inhibitor at 10 microM. Functionally, may play some biological role in the host defense system on the mucous membrane independently of or in cooperation with other substances in airway mucous or bronchial secretions. Plays a role in the proteolytic processing of ACE2. Proteolytically cleaves and activates the human coronavirus 229E (HCoV-229E) spike glycoprotein which facilitate virus-cell membrane fusions; spike proteins are synthesized and maintained in precursor intermediate folding states and proteolysis permits the refolding and energy release required to create stable virus-cell linkages and membrane coalescence. Preferentially cleaves the C-terminal side of arginine residues at the P1 position of certain peptides, cleaving Boc-Phe-Ser-Arg-4-methylcoumaryl-7-amide most efficiently and having an optimum pH of 8.6 with this substrate. This chain is Transmembrane protease serine 11D (TMPRSS11D), found in Homo sapiens (Human).